Consider the following 226-residue polypeptide: UPF0758 protein Daci_1904 (226 aa).

Positions 104 to 226 constitute an MPN domain; sequence ALASPEAVAR…SLSMAGQGML (123 aa). Positions 175, 177, and 188 each coordinate Zn(2+). The JAMM motif signature appears at 175-188; it reads HNHPSGQVQASAAD.

This sequence belongs to the UPF0758 family.

The sequence is that of UPF0758 protein Daci_1904 from Delftia acidovorans (strain DSM 14801 / SPH-1).